Here is a 291-residue protein sequence, read N- to C-terminus: Pyridoxal kinase PdxY (291 aa).

Residues S9 and 44–45 (TQ) contribute to the substrate site. ATP contacts are provided by residues D112, V144, E149, K182, and 207–210 (RPHL). D221 is a substrate binding site.

This sequence belongs to the pyridoxine kinase family. PdxY subfamily. In terms of assembly, homodimer. It depends on Mg(2+) as a cofactor.

The enzyme catalyses pyridoxal + ATP = pyridoxal 5'-phosphate + ADP + H(+). The protein operates within cofactor metabolism; pyridoxal 5'-phosphate salvage; pyridoxal 5'-phosphate from pyridoxal: step 1/1. Functionally, pyridoxal kinase involved in the salvage pathway of pyridoxal 5'-phosphate (PLP). Catalyzes the phosphorylation of pyridoxal to PLP. In Photobacterium profundum (strain SS9), this protein is Pyridoxal kinase PdxY.